Consider the following 288-residue polypeptide: Capsid protein (288 aa).

Ala2 carries the post-translational modification N-acetylalanine; by host.

Belongs to the high plain virus capsid family.

The protein localises to the virion. In High plains virus (isolate Kansas 2004), this protein is Capsid protein.